Reading from the N-terminus, the 221-residue chain is uncharacterized protein (221 aa).

Positions 1 to 18 (MKRFLLLIILFGISFSFV) are cleaved as a signal peptide.

This is an uncharacterized protein from Aquifex aeolicus (strain VF5).